The chain runs to 225 residues: Thymidylate kinase (225 aa).

Glycine 10 to serine 17 provides a ligand contact to ATP.

This sequence belongs to the thymidylate kinase family.

It catalyses the reaction dTMP + ATP = dTDP + ADP. Functionally, phosphorylation of dTMP to form dTDP in both de novo and salvage pathways of dTTP synthesis. The protein is Thymidylate kinase of Polaromonas sp. (strain JS666 / ATCC BAA-500).